Consider the following 425-residue polypeptide: MSIIEDARHGIVTEEMKQVAKAEGVTEDFIRRSVAEGHIVIPVSPYRKVKICGIGEGLRTKVNASIGTSTDIVNIPEEIEKAKQAERAGADTLMELSTGGDFADIRRQIIANTTLSVGSVPLYQAFIEAVKKDGAVIHMKEDDLFRITAEQAKLGTNFMAIHTGINWETVKRLRNQGRHAGLVSRGGAFMTAWMLHNEKENPLYSEFDYLMEIMKEHEVTLSMGNGMRAGAIHDATDRAGIQELLINAELADKAHAKGIQVIVEGPGHVPIDEIATNVQLMKRVTNNKPFYMLGPIVTDIAPGYDDRVSAIGAAISSSLGADFICYVTPAEHLALPTPEEVYEGVISSRIAAHVGDMVKLKKVREADLEMGHARRDLDWERQFAVAMNPARARKIREERMPADTDGCTMCGDFCAIKIVNRYFKF.

Residues Met94, Tyr123, His162, 184–186, 225–228, and Glu264 contribute to the substrate site; these read SRG and NGMR. His268 is a binding site for Zn(2+). A substrate-binding site is contributed by Tyr291. His332 is a binding site for Zn(2+). [4Fe-4S] cluster contacts are provided by Cys407, Cys410, and Cys414.

This sequence belongs to the ThiC family. [4Fe-4S] cluster is required as a cofactor.

It carries out the reaction 5-amino-1-(5-phospho-beta-D-ribosyl)imidazole + S-adenosyl-L-methionine = 4-amino-2-methyl-5-(phosphooxymethyl)pyrimidine + CO + 5'-deoxyadenosine + formate + L-methionine + 3 H(+). Its pathway is cofactor biosynthesis; thiamine diphosphate biosynthesis. In terms of biological role, catalyzes the synthesis of the hydroxymethylpyrimidine phosphate (HMP-P) moiety of thiamine from aminoimidazole ribotide (AIR) in a radical S-adenosyl-L-methionine (SAM)-dependent reaction. The protein is Phosphomethylpyrimidine synthase of Methanoregula boonei (strain DSM 21154 / JCM 14090 / 6A8).